A 488-amino-acid chain; its full sequence is N-succinylglutamate 5-semialdehyde dehydrogenase (488 aa).

221-226 lines the NAD(+) pocket; that stretch reads GSSRTG. Catalysis depends on residues E244 and C278.

Belongs to the aldehyde dehydrogenase family. AstD subfamily.

The enzyme catalyses N-succinyl-L-glutamate 5-semialdehyde + NAD(+) + H2O = N-succinyl-L-glutamate + NADH + 2 H(+). It participates in amino-acid degradation; L-arginine degradation via AST pathway; L-glutamate and succinate from L-arginine: step 4/5. Catalyzes the NAD-dependent reduction of succinylglutamate semialdehyde into succinylglutamate. The polypeptide is N-succinylglutamate 5-semialdehyde dehydrogenase (Pseudomonas fluorescens (strain Pf0-1)).